Consider the following 160-residue polypeptide: Sec-independent protein translocase protein TatB (160 aa).

Residues 1–21 (MFGMGFFEILVVLVVAIIFLG) traverse the membrane as a helical segment. Positions 118-160 (HLNEEVSNEEALNKEVSSDESPKEVQLATDNNTKEHDKEKEHV) are disordered. 2 stretches are compositionally biased toward basic and acidic residues: residues 128-140 (ALNK…ESPK) and 149-160 (NTKEHDKEKEHV).

Belongs to the TatB family. The Tat system comprises two distinct complexes: a TatABC complex, containing multiple copies of TatA, TatB and TatC subunits, and a separate TatA complex, containing only TatA subunits. Substrates initially bind to the TatABC complex, which probably triggers association of the separate TatA complex to form the active translocon.

The protein resides in the cell inner membrane. Its function is as follows. Part of the twin-arginine translocation (Tat) system that transports large folded proteins containing a characteristic twin-arginine motif in their signal peptide across membranes. Together with TatC, TatB is part of a receptor directly interacting with Tat signal peptides. TatB may form an oligomeric binding site that transiently accommodates folded Tat precursor proteins before their translocation. The sequence is that of Sec-independent protein translocase protein TatB from Helicobacter pylori (strain HPAG1).